The sequence spans 569 residues: MMTKAFFNKLPFEVFRRYVRTGKSIPQRSPRTRKSLLVGGTIASAVVLYNFNDTFHDSVKHTALTTKRIAVVTQATTRCFYHYKRALNKSYENKKEREVALNKCHKMCALITLHALRSNGGIYIKLGQHIGAMTYLLPKEWTDTMIPLQDHCPESTYEEIDELFKEDLGTSIEDMFLEFNKTPIGVASLAQVHVAKLKNSDGKGSSVAVKCQHPSLKEFIPLDVMLTRTVFELLDVFFPDYPLTWLGDELQSSIYVELNFTKEAENAEKTRHYFSKFKKQTALKIPKVIESHKRILIMEYVGGKRLDDLEYIDSHGISRSEVSSCLSHIFNNMIFTPNVGIHCDPHGGNLAIRSVKPAKDNGYHNFEIVLFDHGLYRYPSTRTRRLYAKFWLSLLFDKDQTKMKKYAKGFANITDEQFPLLAAAITGRSIDAALNYDISTSRTQEEMDVMANGILEGTLLSDLMSILSRIPRVVLLILKTNDLTRHLDECLQNPLGPERTFLIMTQYCAKTVYDEKVERINSEYARWSIKWMWENLTNWIVYERRINQLYFYDFVLWWKKFIPKTWLSS.

The N-terminal 18 residues, 1–18 (MMTKAFFNKLPFEVFRRY), are a transit peptide targeting the mitochondrion. Residues 19-34 (VRTGKSIPQRSPRTRK) are Mitochondrial matrix-facing. The chain crosses the membrane as a helical span at residues 35–51 (SLLVGGTIASAVVLYNF). Over 52 to 569 (NDTFHDSVKH…KFIPKTWLSS (518 aa)) the chain is Mitochondrial intermembrane.

This sequence belongs to the protein kinase superfamily. ADCK protein kinase family.

It localises to the mitochondrion. Its subcellular location is the mitochondrion inner membrane. In terms of biological role, component of MIOREX complexes, large expressome-like assemblies of ribosomes with factors involved in all the steps of post-transcriptional gene expression. Involved in mitochondrial lipid homeostasis. The chain is ABC1 family protein MCP2 from Saccharomyces cerevisiae (strain ATCC 204508 / S288c) (Baker's yeast).